Here is a 260-residue protein sequence, read N- to C-terminus: Cytochrome c oxidase subunit 2 (260 aa).

Over 1 to 39 (MKFEWLFLTIAPCDAAEPWQLGFQDAATPMMQGIIDLHH) the chain is Mitochondrial intermembrane. The helical transmembrane segment at 40–61 (DIFFFLILILVFVSRILVRALW) threads the bilayer. At 62-76 (HFHYKKNPIPQRIVH) the chain is on the mitochondrial matrix side. Residues 77–104 (GTTIEILRTIFPSIIPMFIAIPSFALLY) traverse the membrane as a helical segment. Over 105 to 260 (SMDEVVVDPA…QLIPQTTGEA (156 aa)) the chain is Mitochondrial intermembrane. Cu cation-binding residues include H186, C221, E223, C225, and H229. Residue E223 coordinates Mg(2+).

It belongs to the cytochrome c oxidase subunit 2 family. Component of the cytochrome c oxidase (complex IV, CIV), a multisubunit enzyme composed of a catalytic core of 3 subunits and several supernumerary subunits. The complex exists as a monomer or a dimer and forms supercomplexes (SCs) in the inner mitochondrial membrane with ubiquinol-cytochrome c oxidoreductase (cytochrome b-c1 complex, complex III, CIII). It depends on Cu cation as a cofactor.

It localises to the mitochondrion inner membrane. It catalyses the reaction 4 Fe(II)-[cytochrome c] + O2 + 8 H(+)(in) = 4 Fe(III)-[cytochrome c] + 2 H2O + 4 H(+)(out). Its function is as follows. Component of the cytochrome c oxidase, the last enzyme in the mitochondrial electron transport chain which drives oxidative phosphorylation. The respiratory chain contains 3 multisubunit complexes succinate dehydrogenase (complex II, CII), ubiquinol-cytochrome c oxidoreductase (cytochrome b-c1 complex, complex III, CIII) and cytochrome c oxidase (complex IV, CIV), that cooperate to transfer electrons derived from NADH and succinate to molecular oxygen, creating an electrochemical gradient over the inner membrane that drives transmembrane transport and the ATP synthase. Cytochrome c oxidase is the component of the respiratory chain that catalyzes the reduction of oxygen to water. Electrons originating from reduced cytochrome c in the intermembrane space (IMS) are transferred via the dinuclear copper A center (CU(A)) of subunit 2 and heme A of subunit 1 to the active site in subunit 1, a binuclear center (BNC) formed by heme A3 and copper B (CU(B)). The BNC reduces molecular oxygen to 2 water molecules using 4 electrons from cytochrome c in the IMS and 4 protons from the mitochondrial matrix. This is Cytochrome c oxidase subunit 2 (COX2) from Glycine max (Soybean).